The following is a 107-amino-acid chain: Nucleoid-associated protein BAbS19_I00290 (107 aa).

Belongs to the YbaB/EbfC family. As to quaternary structure, homodimer.

It is found in the cytoplasm. The protein resides in the nucleoid. Its function is as follows. Binds to DNA and alters its conformation. May be involved in regulation of gene expression, nucleoid organization and DNA protection. The protein is Nucleoid-associated protein BAbS19_I00290 of Brucella abortus (strain S19).